The chain runs to 822 residues: Valine--tRNA ligase (822 aa).

A 'HIGH' region motif is present at residues 41-51; sequence PNVTGQLHLGH. The short motif at 511–515 is the 'KMSKS' region element; it reads KMSKS. Lysine 514 is a binding site for ATP. Positions 765 to 822 form a coiled coil; the sequence is EQKGRELKEIQFLKSEILRAEKILTNKGFLEKAPREKIDLERTKLEKLKEKLVFYEKK.

Belongs to the class-I aminoacyl-tRNA synthetase family. ValS type 1 subfamily. As to quaternary structure, monomer.

The protein resides in the cytoplasm. It carries out the reaction tRNA(Val) + L-valine + ATP = L-valyl-tRNA(Val) + AMP + diphosphate. Its function is as follows. Catalyzes the attachment of valine to tRNA(Val). As ValRS can inadvertently accommodate and process structurally similar amino acids such as threonine, to avoid such errors, it has a 'posttransfer' editing activity that hydrolyzes mischarged Thr-tRNA(Val) in a tRNA-dependent manner. The polypeptide is Valine--tRNA ligase (Mesomycoplasma hyopneumoniae (strain J / ATCC 25934 / NCTC 10110) (Mycoplasma hyopneumoniae)).